A 116-amino-acid chain; its full sequence is Tyrosine-protein phosphatase 20 (116 aa).

The region spanning 1–116 is the Tyrosine-protein phosphatase domain; it reads WMMIVEQKCR…EIGGDAPMVV (116 aa). A substrate-binding site is contributed by Asp84.

The protein belongs to the protein-tyrosine phosphatase family.

The enzyme catalyses O-phospho-L-tyrosyl-[protein] + H2O = L-tyrosyl-[protein] + phosphate. The protein is Tyrosine-protein phosphatase 20 (STY-20) of Styela plicata (Wrinkled sea squirt).